Reading from the N-terminus, the 1459-residue chain is Endogenous retrovirus group K member 7 Pol protein (1459 aa).

In terms of domain architecture, Reverse transcriptase spans 57–245; sequence LEKGHIEPSF…TPFHYLGMQI (189 aa). Residues 161–164 carry the LPQG motif; the sequence is LPQG. A YXDD motif is present at residues 195–198; the sequence is YIDD. One can recognise an RNase H type-1 domain in the interval 460–590; sequence LENALTVFTD…ADLLVSSALI (131 aa). Mg(2+) contacts are provided by D469, E497, D517, and D582. The Integrase-type zinc-finger motif lies at 587-628; sequence SALIKAQELHALTHVNAAGLKNKFDVTWKQAKDIVQHCTQCQ. 4 residues coordinate Zn(2+): H596, H600, C624, and C627. Positions 642–803 constitute an Integrase catalytic domain; sequence RGLCPNALWQ…TSAEQHLTGK (162 aa). The segment at residues 811–859 is a DNA-binding region (integrase-type); that stretch reads KLIWWKDNKNKTWEIGKVITWGRGFACVSPGENQLPVWIPTRHLKFYNE.

This sequence belongs to the beta type-B retroviral polymerase family. HERV class-II K(HML-2) pol subfamily.

It catalyses the reaction DNA(n) + a 2'-deoxyribonucleoside 5'-triphosphate = DNA(n+1) + diphosphate. The enzyme catalyses Endonucleolytic cleavage to 5'-phosphomonoester.. Early post-infection, the reverse transcriptase converts the viral RNA genome into double-stranded viral DNA. The RNase H domain of the reverse transcriptase performs two functions. It degrades the RNA template and specifically removes the RNA primer from the RNA/DNA hybrid. Following nuclear import, the integrase catalyzes the insertion of the linear, double-stranded viral DNA into the host cell chromosome. Endogenous Pol proteins may have kept, lost or modified their original function during evolution. This chain is Endogenous retrovirus group K member 7 Pol protein (ERVK-7), found in Homo sapiens (Human).